A 1612-amino-acid chain; its full sequence is DNA (cytosine-5)-methyltransferase PliMCI (1612 aa).

Residues 7 to 101 (CDQVIPPNVR…NGDTKEEASS (95 aa)) enclose the DMAP1-binding domain. The disordered stretch occupies residues 87–338 (TCSPVNGDTK…TAESKQPPLR (252 aa)). Positions 94–110 (DTKEEASSNGKDDEKAE) are enriched in basic and acidic residues. A compositionally biased stretch (low complexity) spans 115–131 (NGTTSNGSTTNGSSGSS). The segment covering 132–142 (KANGHTNGGYV) has biased composition (polar residues). Positions 143-154 (QSSSQEETGTSQ) are enriched in low complexity. Composition is skewed to basic and acidic residues over residues 193 to 212 (VLGDDERDGVEKKEGEKKDV), 222 to 232 (EESATPDEKTL), and 260 to 289 (KKEEEKMEESSSMEVDKKEMENGDNGKKEE). Residues 626–672 (ASERKKRCGVCEICQAPDCGKCTACKDMIKFGGSGKAKQACKDRRCP) form a CXXC-type zinc finger. Positions 633, 636, 639, 644, 647, 650, 666, and 671 each coordinate Zn(2+). The segment at 677-708 (QEADENDIDEMDNSSNKENKDEKKAKKGRKLE) is disordered. Acidic residues predominate over residues 678–688 (EADENDIDEMD). Positions 691-708 (SNKENKDEKKAKKGRKLE) are enriched in basic and acidic residues. BAH domains lie at 743 to 871 (EKIE…EDYE) and 967 to 1089 (NYRK…EDPP). The interval 1084–1121 (CFEDPPSKSRSTRMKGKGKGKGKGKAKGKIAVEKEEEK) is disordered. Positions 1093-1111 (RSTRMKGKGKGKGKGKAKG) are enriched in basic residues. The SAM-dependent MTase C5-type domain maps to 1131-1590 (LKCLDVFAGC…MEIKVCLQTK (460 aa)). S-adenosyl-L-methionine-binding positions include 1142–1143 (GL), 1160–1161 (EK), 1182–1183 (DC), and C1183. C1218 is a catalytic residue. N1569 and V1571 together coordinate S-adenosyl-L-methionine.

Belongs to the class I-like SAM-binding methyltransferase superfamily. C5-methyltransferase family.

The protein resides in the nucleus. The catalysed reaction is a 2'-deoxycytidine in DNA + S-adenosyl-L-methionine = a 5-methyl-2'-deoxycytidine in DNA + S-adenosyl-L-homocysteine + H(+). Its function is as follows. Methylates CpG residues. The chain is DNA (cytosine-5)-methyltransferase PliMCI (DNMT) from Paracentrotus lividus (Common sea urchin).